A 227-amino-acid polypeptide reads, in one-letter code: N-acetyltransferase family 8 member 7 (227 aa).

The next 2 membrane-spanning stretches (helical) occupy residues 36–56 (MLLL…LFLA) and 58–78 (GSWL…WFLA). The N-acetyltransferase domain occupies 61-220 (LLVLLSILTL…PMINLKYSLT (160 aa)).

Belongs to the camello family.

The protein resides in the membrane. The enzyme catalyses L-lysyl-[protein] + acetyl-CoA = N(6)-acetyl-L-lysyl-[protein] + CoA + H(+). In terms of biological role, has histone acetyltransferase activity in vitro, with specificity for histone H4. This chain is N-acetyltransferase family 8 member 7, found in Mus musculus (Mouse).